Consider the following 187-residue polypeptide: Methylamine dehydrogenase light chain (187 aa).

Residues 1-57 (MKKDTGFDSKIEKLARTTASKTGRRGFIGRLGGFLVGSALLPLLPVDRRSRLGGEVQ) constitute a signal peptide (tat-type signal). Intrachain disulfides connect Cys79–Cys144, Cys85–Cys117, Cys92–Cys177, Cys94–Cys142, Cys102–Cys133, and Cys134–Cys165. Position 113 is a tryptophylquinone (Trp113). Positions 113 to 164 (WVASCYNPGDQQTYLIAYRDCCGKQTCGRCNCVNTQGELPVYRPEFNNDIVW) form a cross-link, tryptophan tryptophylquinone (Trp-Trp).

This sequence belongs to the aromatic amine dehydrogenase light chain family. As to quaternary structure, heterotetramer of two light and two heavy chains. It depends on tryptophan tryptophylquinone residue as a cofactor. Post-translationally, predicted to be exported by the Tat system. The position of the signal peptide cleavage has not been experimentally proven. In terms of processing, tryptophan tryptophylquinone (TTQ) is formed by oxidation of the indole ring of a tryptophan to form tryptophylquinone followed by covalent cross-linking with another tryptophan residue.

Its subcellular location is the periplasm. The catalysed reaction is 2 oxidized [amicyanin] + methylamine + H2O = 2 reduced [amicyanin] + formaldehyde + NH4(+) + 2 H(+). The protein operates within one-carbon metabolism; methylamine degradation; formaldehyde from methylamine: step 1/1. Functionally, methylamine dehydrogenase carries out the oxidation of methylamine. Electrons are passed from methylamine dehydrogenase to amicyanin. In Methylophilus methylotrophus (Bacterium W3A1), this protein is Methylamine dehydrogenase light chain (mauA).